The primary structure comprises 475 residues: Putative aldehyde dehydrogenase SSP0762 (475 aa).

201–207 provides a ligand contact to NAD(+); the sequence is GDGQGVG. Residues E245 and C279 contribute to the active site.

This sequence belongs to the aldehyde dehydrogenase family.

It carries out the reaction an aldehyde + NAD(+) + H2O = a carboxylate + NADH + 2 H(+). The chain is Putative aldehyde dehydrogenase SSP0762 from Staphylococcus saprophyticus subsp. saprophyticus (strain ATCC 15305 / DSM 20229 / NCIMB 8711 / NCTC 7292 / S-41).